Here is a 457-residue protein sequence, read N- to C-terminus: Exodeoxyribonuclease 7 large subunit (457 aa).

Belongs to the XseA family. As to quaternary structure, heterooligomer composed of large and small subunits.

The protein resides in the cytoplasm. It catalyses the reaction Exonucleolytic cleavage in either 5'- to 3'- or 3'- to 5'-direction to yield nucleoside 5'-phosphates.. Bidirectionally degrades single-stranded DNA into large acid-insoluble oligonucleotides, which are then degraded further into small acid-soluble oligonucleotides. This is Exodeoxyribonuclease 7 large subunit from Cronobacter sakazakii (strain ATCC BAA-894) (Enterobacter sakazakii).